The following is a 278-amino-acid chain: tRNA uridine(34) hydroxylase (278 aa).

In terms of domain architecture, Rhodanese spans 122–216; that stretch reads QDPDVVVIDT…YLETIAPEES (95 aa). Cysteine 176 serves as the catalytic Cysteine persulfide intermediate.

Belongs to the TrhO family.

It carries out the reaction uridine(34) in tRNA + AH2 + O2 = 5-hydroxyuridine(34) in tRNA + A + H2O. In terms of biological role, catalyzes oxygen-dependent 5-hydroxyuridine (ho5U) modification at position 34 in tRNAs. This chain is tRNA uridine(34) hydroxylase, found in Synechocystis sp. (strain ATCC 27184 / PCC 6803 / Kazusa).